A 316-amino-acid chain; its full sequence is tRNA pseudouridine synthase B (316 aa).

Residue aspartate 47 is the Nucleophile of the active site.

The protein belongs to the pseudouridine synthase TruB family. Type 1 subfamily.

It catalyses the reaction uridine(55) in tRNA = pseudouridine(55) in tRNA. Its function is as follows. Responsible for synthesis of pseudouridine from uracil-55 in the psi GC loop of transfer RNAs. This is tRNA pseudouridine synthase B from Aliivibrio fischeri (strain ATCC 700601 / ES114) (Vibrio fischeri).